The following is a 156-amino-acid chain: Putative HTH-type transcriptional regulator BadM (156 aa).

The region spanning arginine 4–lysine 130 is the HTH rrf2-type domain. A disordered region spans residues arginine 136–alanine 156. The segment covering glycine 145 to alanine 156 has biased composition (low complexity).

This Rhodopseudomonas palustris (strain ATCC BAA-98 / CGA009) protein is Putative HTH-type transcriptional regulator BadM (badM).